The sequence spans 788 residues: Calpastatin (788 aa).

Over residues 1–11 the composition is skewed to pro residues; it reads MSQPGPKPAAS. Disordered regions lie at residues 1–262, 289–493, and 514–580; these read MSQP…TGPV, LLEK…MCSI, and TLAG…SQEQ. Residue serine 11 is modified to Phosphoserine. Low complexity predominate over residues 12-21; sequence PRPSRGAAAR. The span at 38-49 shows a compositional bias: basic and acidic residues; sequence PGEKKGSDEKKA. Positions 65–87 are enriched in low complexity; it reads AATATKVTASSAATSKSPSMSTT. Basic and acidic residues predominate over residues 99–119; sequence EGPDQKRPREQAVKTESKKPQ. Residue lysine 112 forms a Glycyl lysine isopeptide (Lys-Gly) (interchain with G-Cter in SUMO2) linkage. Position 129 is an N6-acetyllysine (lysine 129). Serine 165 carries the phosphoserine modification. Threonine 216 is subject to Phosphothreonine. Serine 219 carries the phosphoserine modification. The segment covering 246-256 has biased composition (basic and acidic residues); the sequence is GGHEDTNRDDP. One copy of the Inhibitory domain 1 repeat lies at 251–303; sequence TNRDDPPYTGPVVLDPMYSTYLEALGIKEGTIPPEYRKLLEKNEGITQPLPDS. Residues serine 303 and serine 324 each carry the phosphoserine modification. Polar residues-rich tracts occupy residues 318-328 and 369-380; these read SDFTCSSPTGK and QALQALSDSLGT. An Inhibitory domain 2 repeat occupies 384–436; it reads DPPSHVSQAEQVKEAKAKEERQEKCGEDEDTVPAEYRLKPAKDKDGKPLLPEP. Basic and acidic residues-rich tracts occupy residues 394–408 and 419–430; these read QVKE…QEKC and YRLKPAKDKDGK. Positions 441-453 are enriched in low complexity; sequence KSLSESELIGELS. Phosphoserine occurs at positions 444, 446, and 453. Threonine 479 is modified (phosphothreonine). Serine 518 bears the Phosphoserine mark. A compositionally biased stretch (basic and acidic residues) spans 522 to 570; it reads READPEHEKTVEDKVKEKAKEEEHEKLGEKEETVPPDYRLEEVKDKDGK. The Inhibitory domain 3 repeat unit spans residues 524-577; sequence ADPEHEKTVEDKVKEKAKEEEHEKLGEKEETVPPDYRLEEVKDKDGKPLLPKES. 4 positions are modified to phosphoserine: serine 594, serine 605, serine 653, and serine 655. A disordered region spans residues 620–788; the sequence is VVSQTPAPST…PKAKEDARHS (169 aa). The stretch at 661–714 is one Inhibitory domain 4 repeat; that stretch reads PDPDENKPLDDKVKEKIKPEHSEKLGERDDTIPPEYRHLLDNDGKDKPEKPPTK. Composition is skewed to basic and acidic residues over residues 661-726 and 759-788; these read PDPD…RDPI and ASKD…ARHS.

Belongs to the protease inhibitor I27 (calpastatin) family. As to expression, isoform 2 is the major form in all tissues examined. Isoform 1 accounts for 5-10% in tissues such as skeletal muscle, liver and brain, and 30% in myoblasts. Isoforms 4 and 5 are testis-specific. Isoform 6 is highly expressed in heart and skeletal muscle with lower levels in liver, brain and testis. Isoform 7 is expressed at high levels in liver.

Specific inhibition of calpain (calcium-dependent cysteine protease). Plays a key role in postmortem tenderization of meat and have been proposed to be involved in muscle protein degradation in living tissue. The sequence is that of Calpastatin (Cast) from Mus musculus (Mouse).